Here is a 412-residue protein sequence, read N- to C-terminus: MAKRPLGLGKQSREKKRKVESVEKKSDEPSRESTPVRSQMSVELDDDADLDDELAQLKGLWSKYFHSDRDDEYVLNGIVHECDRLLRLSEEDKEIKKTLNDIFHGIYALALSELTIFKAGDEEATEEKRKKDVSSFFESAIERVELGLSHFPESQFLKLVLAKIIFQRIPLEYISNLHLKSKDKKLDLVGQLEHGKKHFSIYENDTEFTFEILQMVNDLLDIVENFGREQSIQEGIDSDNEEEEELIDIELEPEHPVYPLQQSLEANYEWLRNHFDKLLDNTNTDVKIYASIANTLGELYLKKAEEPSKVFLSLQYDDGGSEKVSDKEAKNAQETALKHTKKALEYLEKAKLEDDPDTWVQVAEAYIDLGNLLDNESAEQEEAYKTAEEILGKANKASHGKFQDVLDNFLQG.

Positions 1–45 (MAKRPLGLGKQSREKKRKVESVEKKSDEPSRESTPVRSQMSVELD) are disordered. The span at 17-31 (RKVESVEKKSDEPSR) shows a compositional bias: basic and acidic residues. Residue serine 30 is modified to Phosphoserine. Residues 32-41 (ESTPVRSQMS) show a composition bias toward polar residues.

Belongs to the ETT1 family. As to quaternary structure, interacts with STM1.

The protein resides in the nucleus. Its function is as follows. Required for correct translation termination and probably involved in regulation of hypoxic gene expression in association TPA1. Inhibits replication of Brome mosaic virus. The polypeptide is Enhancer of translation termination 1 (ETT1) (Saccharomyces cerevisiae (strain JAY291) (Baker's yeast)).